Reading from the N-terminus, the 503-residue chain is Probable inactive beta-glucosidase 33 (503 aa).

Residues 1-30 (MATGELALVSSLFIVVVFLLLGAVAREASA) form the signal peptide. A beta-D-glucoside is bound by residues Q50, H150, and 195-196 (NQ). A disulfide bond links C215 and C223. Residue N222 is glycosylated (N-linked (GlcNAc...) asparagine). Positions 339 and 399 each coordinate a beta-D-glucoside. Residue E399 is the Nucleophile of the active site. N-linked (GlcNAc...) asparagine glycosylation occurs at N436. A beta-D-glucoside is bound by residues W446, 453–454 (EF), and F462.

This sequence belongs to the glycosyl hydrolase 1 family.

This Oryza sativa subsp. japonica (Rice) protein is Probable inactive beta-glucosidase 33 (BGLU33).